The chain runs to 1153 residues: Error-prone DNA polymerase (1153 aa).

Disordered stretches follow at residues 1-39 and 64-89; these read MFYS…QAQP and VGEG…GASQ.

This sequence belongs to the DNA polymerase type-C family. DnaE2 subfamily.

The protein localises to the cytoplasm. The catalysed reaction is DNA(n) + a 2'-deoxyribonucleoside 5'-triphosphate = DNA(n+1) + diphosphate. DNA polymerase involved in damage-induced mutagenesis and translesion synthesis (TLS). It is not the major replicative DNA polymerase. This is Error-prone DNA polymerase from Corynebacterium jeikeium (strain K411).